The chain runs to 181 residues: Shikimate kinase (181 aa).

ATP is bound at residue 17-22 (GAGKTT). Thr-21 contacts Mg(2+). The substrate site is built by Asp-39, Arg-63, and Gly-85. Arg-122 is an ATP binding site. Arg-141 provides a ligand contact to substrate.

This sequence belongs to the shikimate kinase family. Monomer. Mg(2+) serves as cofactor.

The protein localises to the cytoplasm. The catalysed reaction is shikimate + ATP = 3-phosphoshikimate + ADP + H(+). It participates in metabolic intermediate biosynthesis; chorismate biosynthesis; chorismate from D-erythrose 4-phosphate and phosphoenolpyruvate: step 5/7. Its function is as follows. Catalyzes the specific phosphorylation of the 3-hydroxyl group of shikimic acid using ATP as a cosubstrate. The protein is Shikimate kinase of Trichormus variabilis (strain ATCC 29413 / PCC 7937) (Anabaena variabilis).